A 47-amino-acid polypeptide reads, in one-letter code: Large ribosomal subunit protein bL36A (47 aa).

The protein belongs to the bacterial ribosomal protein bL36 family.

In Yersinia enterocolitica serotype O:8 / biotype 1B (strain NCTC 13174 / 8081), this protein is Large ribosomal subunit protein bL36A.